The primary structure comprises 119 residues: Protein TusC (119 aa).

Belongs to the DsrF/TusC family. In terms of assembly, heterohexamer, formed by a dimer of trimers. The hexameric TusBCD complex contains 2 copies each of TusB, TusC and TusD. The TusBCD complex interacts with TusE.

Its subcellular location is the cytoplasm. Part of a sulfur-relay system required for 2-thiolation of 5-methylaminomethyl-2-thiouridine (mnm(5)s(2)U) at tRNA wobble positions. The chain is Protein TusC from Escherichia coli O8 (strain IAI1).